The chain runs to 429 residues: Histidine--tRNA ligase (429 aa).

It belongs to the class-II aminoacyl-tRNA synthetase family. As to quaternary structure, homodimer.

Its subcellular location is the cytoplasm. The catalysed reaction is tRNA(His) + L-histidine + ATP = L-histidyl-tRNA(His) + AMP + diphosphate + H(+). The chain is Histidine--tRNA ligase from Corynebacterium efficiens (strain DSM 44549 / YS-314 / AJ 12310 / JCM 11189 / NBRC 100395).